The following is a 25-amino-acid chain: Repetitive proline-rich cell wall protein (25 aa).

Residues 1–25 (NYDKPPVEKPPVYKPPVEKPPVYKP) form a disordered region. 4 tandem repeats follow at residues 5 to 9 (PPVEK), 10 to 14 (PPVYK), 15 to 19 (PPVEK), and 20 to 24 (PPVYK). Positions 5–24 (PPVEKPPVYKPPVEKPPVYK) are 4 X 5 AA tandem repeats of P-P-V-[EY]-K. 4 positions are modified to 4-hydroxyproline: Pro-6, Pro-11, Pro-16, and Pro-21. Pro residues predominate over residues 8–25 (EKPPVYKPPVEKPPVYKP).

This sequence belongs to the plant proline-rich protein superfamily. ENOD12 family.

It localises to the secreted. The protein localises to the cell wall. This Phaseolus vulgaris (Kidney bean) protein is Repetitive proline-rich cell wall protein.